The sequence spans 364 residues: DNA replication and repair protein RecF (364 aa).

Residue 30-37 (GNNAQGKT) participates in ATP binding.

The protein belongs to the RecF family.

Its subcellular location is the cytoplasm. The RecF protein is involved in DNA metabolism; it is required for DNA replication and normal SOS inducibility. RecF binds preferentially to single-stranded, linear DNA. It also seems to bind ATP. The polypeptide is DNA replication and repair protein RecF (Clostridium botulinum (strain Langeland / NCTC 10281 / Type F)).